Here is a 95-residue protein sequence, read N- to C-terminus: Pyrimidine/purine nucleoside phosphorylase (95 aa).

Belongs to the nucleoside phosphorylase PpnP family.

The enzyme catalyses a purine D-ribonucleoside + phosphate = a purine nucleobase + alpha-D-ribose 1-phosphate. It carries out the reaction adenosine + phosphate = alpha-D-ribose 1-phosphate + adenine. It catalyses the reaction cytidine + phosphate = cytosine + alpha-D-ribose 1-phosphate. The catalysed reaction is guanosine + phosphate = alpha-D-ribose 1-phosphate + guanine. The enzyme catalyses inosine + phosphate = alpha-D-ribose 1-phosphate + hypoxanthine. It carries out the reaction thymidine + phosphate = 2-deoxy-alpha-D-ribose 1-phosphate + thymine. It catalyses the reaction uridine + phosphate = alpha-D-ribose 1-phosphate + uracil. The catalysed reaction is xanthosine + phosphate = alpha-D-ribose 1-phosphate + xanthine. Its function is as follows. Catalyzes the phosphorolysis of diverse nucleosides, yielding D-ribose 1-phosphate and the respective free bases. Can use uridine, adenosine, guanosine, cytidine, thymidine, inosine and xanthosine as substrates. Also catalyzes the reverse reactions. In Yersinia pestis bv. Antiqua (strain Antiqua), this protein is Pyrimidine/purine nucleoside phosphorylase.